We begin with the raw amino-acid sequence, 716 residues long: Putative mannosyltransferase YkcB (716 aa).

Transmembrane regions (helical) follow at residues 8 to 28 (LDIV…YNIW), 44 to 64 (MMQS…FITV), 87 to 107 (SVIL…YLLI), 118 to 135 (IASF…VART), 137 to 157 (NVDA…FKAI), 159 to 179 (KGKL…FNTK), 180 to 200 (MLQA…AANA), and 206 to 226 (IVSL…WPLI). The tract at residues 260–363 (TGQNSGGGQG…GSGMFGTGTP (104 aa)) is disordered. Residues 278–289 (EMSSSDNTQAPP) are compositionally biased toward polar residues. Low complexity predominate over residues 290-307 (NQSSSNSSSSDGKSSNGN). Residues 318–347 (PSGGQGGPPSGGDGGQGGPGGDGGKGGTGT) show a composition bias toward gly residues. 6 helical membrane-spanning segments follow: residues 376–396 (QISW…IAGA), 409–429 (TVFW…AEFF), 433–453 (YLIM…VALV), 462–482 (WKAW…LFIL), 491–511 (VGWS…LLLF), and 518–538 (FSYY…MYWA). A disordered region spans residues 664-716 (VASEKWQSSSDQKTENTDSADTSSSKASGENGKMGGPGGMNQSATLYELHADE). Positions 680-694 (TDSADTSSSKASGEN) are enriched in low complexity.

The protein belongs to the glycosyltransferase 39 family.

It is found in the cell membrane. This is Putative mannosyltransferase YkcB (ykcB) from Bacillus subtilis (strain 168).